The following is a 147-amino-acid chain: Putative protein CLUHP3 (147 aa).

The disordered stretch occupies residues 14 to 47 (KEPEGGRRRLSHPGNMGWMRPSQETTPPDRSHHS).

The chain is Putative protein CLUHP3 (CLUHP3) from Homo sapiens (Human).